A 215-amino-acid polypeptide reads, in one-letter code: Probable cutinase 3 (215 aa).

A signal peptide spans 1–17 (MHFRALLVSALATLAMA). 2 cysteine pairs are disulfide-bonded: C39-C118 and C65-C79. Catalysis depends on S129, which acts as the Nucleophile. A disulfide bridge connects residues C180 and C187. Residue D184 is part of the active site. H197 serves as the catalytic Proton donor/acceptor.

Belongs to the cutinase family.

Its subcellular location is the secreted. The catalysed reaction is cutin + H2O = cutin monomers.. In terms of biological role, catalyzes the hydrolysis of complex carboxylic polyesters found in the cell wall of plants. Degrades cutin, a macromolecule that forms the structure of the plant cuticle. The sequence is that of Probable cutinase 3 from Aspergillus clavatus (strain ATCC 1007 / CBS 513.65 / DSM 816 / NCTC 3887 / NRRL 1 / QM 1276 / 107).